The sequence spans 168 residues: Gremlin-2 (168 aa).

The signal sequence occupies residues 1 to 21 (MFWKLSLSLFLVAVLVKVAEA). N-linked (GlcNAc...) asparagine glycosylation occurs at Asn40. Disulfide bonds link Cys73/Cys123, Cys87/Cys137, Cys97/Cys155, and Cys101/Cys157. The 91-residue stretch at 73–163 (CKTQPLRQTV…QCRCMSVNLS (91 aa)) folds into the CTCK domain. An N-linked (GlcNAc...) asparagine glycan is attached at Asn161.

Belongs to the DAN family. As to quaternary structure, homodimer. Interacts with BMP2, BMP4 and BMP7, but has lower affinity for BMP7 than for BMP2 and BMP4. Binds heparin; this impairs the interaction with BMP2. N-glycosylated.

The protein localises to the secreted. Its function is as follows. Cytokine that inhibits the activity of BMP2 and BMP4 in a dose-dependent manner, and thereby modulates signaling by BMP family members. Contributes to the regulation of embryonic morphogenesis via BMP family members. Antagonizes BMP4-induced suppression of progesterone production in granulosa cells. The polypeptide is Gremlin-2 (GREM2) (Homo sapiens (Human)).